The primary structure comprises 120 residues: NAD(P)H-quinone oxidoreductase subunit 3, chloroplastic (120 aa).

Helical transmembrane passes span 9-29 (IFWAFLIISSLIPILAFFISG), 64-84 (MFALVFVVFDVETVFLYPWAM), and 88-108 (VLGLSVFLEAFVFVLILIVGL).

This sequence belongs to the complex I subunit 3 family. NDH is composed of at least 16 different subunits, 5 of which are encoded in the nucleus.

The protein resides in the plastid. It is found in the chloroplast thylakoid membrane. It carries out the reaction a plastoquinone + NADH + (n+1) H(+)(in) = a plastoquinol + NAD(+) + n H(+)(out). It catalyses the reaction a plastoquinone + NADPH + (n+1) H(+)(in) = a plastoquinol + NADP(+) + n H(+)(out). NDH shuttles electrons from NAD(P)H:plastoquinone, via FMN and iron-sulfur (Fe-S) centers, to quinones in the photosynthetic chain and possibly in a chloroplast respiratory chain. The immediate electron acceptor for the enzyme in this species is believed to be plastoquinone. Couples the redox reaction to proton translocation, and thus conserves the redox energy in a proton gradient. The chain is NAD(P)H-quinone oxidoreductase subunit 3, chloroplastic from Jasminum nudiflorum (Winter jasmine).